The chain runs to 378 residues: Actin-related protein 2/3 complex subunit 1B (378 aa).

WD repeat units lie at residues Arg-8–Arg-47, Lys-53–Thr-92, Arg-97–Lys-138, Arg-143–Lys-182, Leu-203–Gln-242, Ile-257–Ser-295, and Val-331–Gly-375. The tract at residues Thr-319–Val-340 is disordered.

The protein belongs to the WD repeat ARPC1 family. As to quaternary structure, component of the Arp2/3 complex composed of ARP2, ARP3, ARPC1/p41-ARC, ARPC2/p34-ARC, ARPC3/p21-ARC, ARPC4/p20-ARC and ARPC5/p16-ARC. Expressed at low levels in all tissues with a relatively highest expression in inflorescences.

The protein resides in the cytoplasm. It is found in the cytoskeleton. In terms of biological role, functions as a component of the Arp2/3 complex which is involved in regulation of actin polymerization and together with an activating nucleation-promoting factor (NPF) mediates the formation of branched actin networks. Arp2/3 complex plays a critical role in the control of cell morphogenesis via the modulation of cell polarity development. This Arabidopsis thaliana (Mouse-ear cress) protein is Actin-related protein 2/3 complex subunit 1B (ARPC1B).